A 320-amino-acid chain; its full sequence is Cytochrome f (320 aa).

An N-terminal signal peptide occupies residues 1-36 (MKHTNSKQKLKDIINFCQAIFTLCIICLYQANISNS). Y37, C57, C60, and H61 together coordinate heme. A helical membrane pass occupies residues 286–305 (LISFIFFSISVLISQLFFVL).

Belongs to the cytochrome f family. The 4 large subunits of the cytochrome b6-f complex are cytochrome b6, subunit IV (17 kDa polypeptide, petD), cytochrome f and the Rieske protein, while the 4 small subunits are PetG, PetL, PetM and PetN. The complex functions as a dimer. Heme is required as a cofactor.

The protein resides in the plastid. It is found in the chloroplast thylakoid membrane. Functionally, component of the cytochrome b6-f complex, which mediates electron transfer between photosystem II (PSII) and photosystem I (PSI), cyclic electron flow around PSI, and state transitions. The polypeptide is Cytochrome f (petA) (Cyanidium caldarium (Red alga)).